The chain runs to 556 residues: Dihydroxy-acid dehydratase (556 aa).

Asp-78 is a Mg(2+) binding site. Residue Cys-119 participates in [2Fe-2S] cluster binding. Mg(2+)-binding residues include Asp-120 and Lys-121. Lys-121 bears the N6-carboxylysine mark. Cys-195 contributes to the [2Fe-2S] cluster binding site. Residue Glu-446 coordinates Mg(2+). The Proton acceptor role is filled by Ser-472.

The protein belongs to the IlvD/Edd family. As to quaternary structure, homodimer. [2Fe-2S] cluster serves as cofactor. It depends on Mg(2+) as a cofactor.

The catalysed reaction is (2R)-2,3-dihydroxy-3-methylbutanoate = 3-methyl-2-oxobutanoate + H2O. It catalyses the reaction (2R,3R)-2,3-dihydroxy-3-methylpentanoate = (S)-3-methyl-2-oxopentanoate + H2O. Its pathway is amino-acid biosynthesis; L-isoleucine biosynthesis; L-isoleucine from 2-oxobutanoate: step 3/4. The protein operates within amino-acid biosynthesis; L-valine biosynthesis; L-valine from pyruvate: step 3/4. Functions in the biosynthesis of branched-chain amino acids. Catalyzes the dehydration of (2R,3R)-2,3-dihydroxy-3-methylpentanoate (2,3-dihydroxy-3-methylvalerate) into 2-oxo-3-methylpentanoate (2-oxo-3-methylvalerate) and of (2R)-2,3-dihydroxy-3-methylbutanoate (2,3-dihydroxyisovalerate) into 2-oxo-3-methylbutanoate (2-oxoisovalerate), the penultimate precursor to L-isoleucine and L-valine, respectively. The polypeptide is Dihydroxy-acid dehydratase (Desulfatibacillum aliphaticivorans).